Consider the following 360-residue polypeptide: Peptide chain release factor 1 (360 aa).

An N5-methylglutamine modification is found at Gln237.

The protein belongs to the prokaryotic/mitochondrial release factor family. Post-translationally, methylated by PrmC. Methylation increases the termination efficiency of RF1.

The protein localises to the cytoplasm. Functionally, peptide chain release factor 1 directs the termination of translation in response to the peptide chain termination codons UAG and UAA. This chain is Peptide chain release factor 1, found in Teredinibacter turnerae (strain ATCC 39867 / T7901).